We begin with the raw amino-acid sequence, 136 residues long: EQIAEFKEAFSLFDKDGDGTITTKELGTVMRSLGQNPTEAELQDMINEVDADGNGTIDFPEFLTMMARKMKDTDSEEEIREAFRVFDKDGNGYISAAELRHVMTNLGEKLTDEEVDEMIREADIDGDGQVNYEEFV.

4 consecutive EF-hand domains span residues 1–36 (EQIA…LGQN), 37–72 (PTEA…KMKD), 74–109 (DSEE…LGEK), and 110–136 (LTDE…EEFV). The Ca(2+) site is built by aspartate 14, aspartate 16, aspartate 18, threonine 20, glutamate 25, aspartate 50, aspartate 52, asparagine 54, threonine 56, glutamate 61, aspartate 87, aspartate 89, asparagine 91, tyrosine 93, and glutamate 98. Residue lysine 109 is modified to N6,N6,N6-trimethyllysine. Aspartate 123, aspartate 125, aspartate 127, glutamine 129, and glutamate 134 together coordinate Ca(2+).

The protein belongs to the calmodulin family.

Its function is as follows. Calmodulin acts as part of a calcium signal transduction pathway by mediating the control of a large number of enzymes, ion channels, aquaporins and other proteins through calcium-binding. Calcium-binding is required for the activation of calmodulin. Among the enzymes to be stimulated by the calmodulin-calcium complex are a number of protein kinases, such as myosin light-chain kinases and calmodulin-dependent protein kinase type II (CaMK2), and phosphatases. The sequence is that of Calmodulin-A (calm1) from Oryzias latipes (Japanese rice fish).